Here is a 61-residue protein sequence, read N- to C-terminus: Metallothionein-2 (61 aa).

N-acetylmethionine is present on M1. The beta stretch occupies residues 1–29; sequence MDPNCSCVAGDSCTCAGSCKCKECKCTSC. The a divalent metal cation site is built by C5, C7, C13, C15, C19, C21, C24, C26, C29, C33, C34, C36, C37, C41, C44, C48, C50, C57, C59, and C60. Positions 20–25 are antigenic epitope; the sequence is KCKECK. Residues 30–61 are alpha; sequence KKSCCSCCPVGCAKCAQGCICKGASDKCNCCA.

It belongs to the metallothionein superfamily. Type 1 family.

Metallothioneins have a high content of cysteine residues that bind various heavy metals; these proteins are transcriptionally regulated by both heavy metals and glucocorticoids. The sequence is that of Metallothionein-2 (MT2) from Macaca fascicularis (Crab-eating macaque).